Reading from the N-terminus, the 437-residue chain is Neomycin resistance protein (437 aa).

Disordered regions lie at residues 161–285 (GQRG…EEEA) and 305–338 (VSGA…PVPD). The span at 203–229 (PPTGARSPGATAGARATASTSSSSVRS) shows a compositional bias: low complexity. The span at 324 to 338 (RRRHRGRRHGRPVPD) shows a compositional bias: basic residues.

The protein belongs to the Gram-positive plasmids replication protein type 1 family.

The protein is Neomycin resistance protein of Streptomyces cyanogenus.